Consider the following 361-residue polypeptide: 5-formaminoimidazole-4-carboxamide-1-(beta)-D-ribofuranosyl 5'-monophosphate synthetase (361 aa).

Residues His27 and Ser94 each contribute to the 5-amino-1-(5-phospho-beta-D-ribosyl)imidazole-4-carboxamide site. In terms of domain architecture, ATP-grasp spans 116–348; that stretch reads RQILRWEAER…MGQRIAKEIK (233 aa). Residues 146–208 and Glu230 contribute to the ATP site; that span reads PDEI…TNYC. Residue Asn258 coordinates 5-amino-1-(5-phospho-beta-D-ribosyl)imidazole-4-carboxamide. Gln297 and Glu310 together coordinate Mg(2+).

The protein belongs to the phosphohexose mutase family. Requires Mg(2+) as cofactor. It depends on Mn(2+) as a cofactor.

It catalyses the reaction 5-amino-1-(5-phospho-beta-D-ribosyl)imidazole-4-carboxamide + formate + ATP = 5-formamido-1-(5-phospho-D-ribosyl)imidazole-4-carboxamide + ADP + phosphate. It functions in the pathway purine metabolism; IMP biosynthesis via de novo pathway; 5-formamido-1-(5-phospho-D-ribosyl)imidazole-4-carboxamide from 5-amino-1-(5-phospho-D-ribosyl)imidazole-4-carboxamide (formate route): step 1/1. Catalyzes the ATP- and formate-dependent formylation of 5-aminoimidazole-4-carboxamide-1-beta-d-ribofuranosyl 5'-monophosphate (AICAR) to 5-formaminoimidazole-4-carboxamide-1-beta-d-ribofuranosyl 5'-monophosphate (FAICAR) in the absence of folates. This Methanococcus aeolicus (strain ATCC BAA-1280 / DSM 17508 / OCM 812 / Nankai-3) protein is 5-formaminoimidazole-4-carboxamide-1-(beta)-D-ribofuranosyl 5'-monophosphate synthetase.